Reading from the N-terminus, the 432-residue chain is N-acylneuraminate cytidylyltransferase (432 aa).

Methionine 1 carries the N-acetylmethionine modification. The disordered stretch occupies residues 1–38; sequence MDALEKGAATSGPAPRGRPSRGRPPKLQRSRGAGRGLE. The short motif at 15-31 is the BC1 motif element; that stretch reads PRGRPSRGRPPKLQRSR. Residues 18 to 29 are compositionally biased toward basic residues; that stretch reads RPSRGRPPKLQR. Omega-N-methylarginine is present on residues arginine 35 and arginine 50. Substrate contacts are provided by arginine 50, asparagine 60, arginine 109, serine 118, serine 120, and glutamine 141. A BC2 motif motif is present at residues 198–204; that stretch reads KRPRRQD. The active site involves arginine 199. Positions 267-274 match the BC3 motif motif; it reads KEKLKEIK.

Belongs to the CMP-NeuNAc synthase family. In terms of assembly, homotetramer; the active enzyme is formed by a dimer of dimers. Liver.

It is found in the nucleus. The enzyme catalyses an N-acylneuraminate + CTP = a CMP-N-acyl-beta-neuraminate + diphosphate. It functions in the pathway amino-sugar metabolism; N-acetylneuraminate metabolism. Catalyzes the activation of N-acetylneuraminic acid (NeuNAc) to cytidine 5'-monophosphate N-acetylneuraminic acid (CMP-NeuNAc), a substrate required for the addition of sialic acid. Has some activity toward NeuNAc, N-glycolylneuraminic acid (Neu5Gc) or 2-keto-3-deoxy-D-glycero-D-galacto-nononic acid (KDN). The sequence is that of N-acylneuraminate cytidylyltransferase (Cmas) from Rattus norvegicus (Rat).